The following is a 402-amino-acid chain: Putative F-box protein At3g23960 (402 aa).

The segment at 1–23 is disordered; sequence MRSRQLHNVSEDRETLSRRNKRS. One can recognise an F-box domain in the interval 26-73; that stretch reads SLNGHIPIDLLIEIFLKLPVKSIATCRSVSKFWTYVLGRQDFTELFLT.

The sequence is that of Putative F-box protein At3g23960 from Arabidopsis thaliana (Mouse-ear cress).